The primary structure comprises 287 residues: MDEIVKNIREGTHVLLPFYETLPELNLSLGKSPLPSLEYGANYFLQISRVNDLNRMPTDMLKLFTHDIMLPESDLDKVYEILKINSVKYYGRSTKADAVVADLSAHNKLFKRERDAIKSNNHLTENNLYISDYKMLTFDVFRPLFDFVNEKYCIIKLPTLFGRGVIDTMRIYCSLFKNVRLLKCVSDSWLKDSAIMVASDVCKKNLDLFMSHVKSVTKSSSWKDVNSVQFSILNNPVDTEFINKFLEFSNRVYEALYYVHSLLYSSMTSDSKSIENKHQRRLVKLLL.

The protein belongs to the chordopoxvirinae mRNA-capping enzyme regulatory subunit family. Heterodimer of a catalytic and a regulatory subunit. Intrinsic methyltransferase activity of the catalytic subunit is weak and needs to be stimulated 30- to 50-fold by the regulatory subunit, which is itself catalytically inert.

It is found in the virion. Regulatory subunit of the mRNA cap enzyme which stabilizes the catalytic subunit and enhances its methyltransferase activity through an allosteric mechanism. Heterodimeric mRNA capping enzyme catalyzes the linkage of a N7-methyl-guanosine moiety to the first transcribed nucleotide (cap 0 structure), whereas the polymerase associated VP39 is responsible for a second methylation at the 2'-O position of the ribose (cap 1 structure). In terms of biological role, the heterodimeric enzyme is also involved in early viral gene transcription termination and intermediate viral gene transcription initiation. Early gene transcription termination requires the termination factor VTF, the DNA-dependent ATPase NPH-I and the Rap94 subunit of the viral RNA polymerase, as well as the presence of a specific termination motif. Binds, together with RAP94, to the termination motif 5'-UUUUUNU-3' in the nascent early mRNA. The polypeptide is mRNA-capping enzyme regulatory subunit (Vaccinia virus (strain Ankara) (VACV)).